Reading from the N-terminus, the 112-residue chain is Large ribosomal subunit protein bL17 (112 aa).

It belongs to the bacterial ribosomal protein bL17 family. Part of the 50S ribosomal subunit. Contacts protein L32.

This is Large ribosomal subunit protein bL17 from Desulfitobacterium hafniense (strain DSM 10664 / DCB-2).